We begin with the raw amino-acid sequence, 882 residues long: MKQLTSSQVRQMFLDFFKEHGHMVMQSASLIPQDDPTLLWINSGVATMKKYFDGSVVPKNHRITSSQKSIRTNDIENVGKTARHQTFFEMLGNFSVGDYFKKEVIPWAWEFLTSPKWLGLDPDKLYVTVYPKDTEAYHMWHDVVGLPEDHIVKLEDNFWDIGEGPCGPDSEIFYDRGQENNDVAEDDPENFPGGENARYLEIWNIVFSQFNHLPNGKYVDQPHKNIDTGMGLERVVSIIQDAPTNFETDLFMPIIKETEKLSDGKKYAANKEDDVAFKIIADHVRAVSFAIADGALPSNSGRGYVLRRLIRRADLNGQRLGIKGAFLYKLVPVVGEIMKSHYPEVVDQQAFIQKVIKNEEERFQVTLSSGLNLLDNIIAEAKKSDDKTISGKDAFKLFDTYGFPYELTFEAAQDAGLKIDKKGFDEEMKAQKERARKARGNLQSMGSQDVTLMNIKDKSEFEYGTLEEKHAKLIDIVVDDKLVDKADGEHATLIFDKTPFYAERGGQVADHGEILNQNGELVARVTDVQHAPNDQNLHFVDVILPLEKGQEYVLKVDQKRRRGLKHNHTATHLLHAALREVLGTHTHQAGSLVEPDYLRFDFTSLEPMTKKEIASVEKLVNEKIWEEIPVKTTVTDPDTGLKMGALALFGEKYGDTVRVVQIDDFSTEFCGGTHCENTDQIGMLKIVSESAVGAGTRRIIAVTGPEAYKYVTDRDEILKEVQDEVKATKAEDVVNKISSIEDDLRASQKEAEQLKAQINKAKAGDLFNDIKQVKDLTVIAAQADVEGMNDLRELADNWKSSNKSDVLVLAAEVNGKANMVISLDDKAIKAGLKAGDLIKTAAPIFGGGGGGRPNMAQAGGKNPAGLKDAIAKVLQEVEEKQN.

Zn(2+) contacts are provided by His568, His572, Cys670, and His674.

Belongs to the class-II aminoacyl-tRNA synthetase family. Zn(2+) serves as cofactor.

It is found in the cytoplasm. It carries out the reaction tRNA(Ala) + L-alanine + ATP = L-alanyl-tRNA(Ala) + AMP + diphosphate. Catalyzes the attachment of alanine to tRNA(Ala) in a two-step reaction: alanine is first activated by ATP to form Ala-AMP and then transferred to the acceptor end of tRNA(Ala). Also edits incorrectly charged Ser-tRNA(Ala) and Gly-tRNA(Ala) via its editing domain. This is Alanine--tRNA ligase from Lactobacillus johnsonii (strain CNCM I-12250 / La1 / NCC 533).